The primary structure comprises 501 residues: Dipeptide and tripeptide permease A (501 aa).

At 1–21 (MSTANNKPAESVSLNAFKQPR) the chain is on the cytoplasmic side. The helical transmembrane segment at 22 to 44 (AFYLIFSIELWERFGYYGLQGIM) threads the bilayer. The Periplasmic segment spans residues 45–59 (AVYLVKQLGMSEADS). The chain crosses the membrane as a helical span at residues 60-80 (ITLFSSFSALVYGLVAIGGWL). The Cytoplasmic segment spans residues 81–89 (GDKVLGTKR). Residues 90-110 (VIMLGAIVLAIGYALVAWSGH) form a helical membrane-spanning segment. Position 111 (Asp111) is a topological domain, periplasmic. The chain crosses the membrane as a helical span at residues 112-132 (AAIVYMGMATIAVGNGLFKAN). The Cytoplasmic portion of the chain corresponds to 133–153 (PSSLLSTCYDKNDPRLDGAFT). Residues 154-174 (MYYMSINIGSFFSMLATPWLA) form a helical membrane-spanning segment. Residues 175–178 (ARFG) lie on the Periplasmic side of the membrane. A helical transmembrane segment spans residues 179–199 (WSVAFALSVVGMVITIINFAF). Over 200–218 (CQKWVKQYGSKPDFAPVHM) the chain is Cytoplasmic. Residues 219-239 (GKLLATIAGVVVLVAIATWLL) traverse the membrane as a helical segment. At 240 to 246 (HNQGIAR) the chain is on the periplasmic side. The helical transmembrane segment at 247–267 (MVLGVVALGIVVIFAKETIGL) threads the bilayer. At 268–274 (KGAARRK) the chain is on the cytoplasmic side. A helical transmembrane segment spans residues 275–295 (MIVAFLLMVEAIVFFVLYSQM). At 296-320 (PTSLNFFAIRNVEHSILGIAFEPEQ) the chain is on the periplasmic side. Residues 321-341 (YQALNPFWIMIGSPILAAIYN) form a helical membrane-spanning segment. Over 342 to 352 (KMGDRLPMPHK) the chain is Cytoplasmic. A helical transmembrane segment spans residues 353–373 (FAIGMVLCSGAFLVLPLGAKF). Residues 374–383 (ASDAGIVSVN) lie on the Periplasmic side of the membrane. A helical transmembrane segment spans residues 384–404 (WLILSYALQSIGELMISGLGL). Topologically, residues 405 to 414 (AMVAQLVPQR) are cytoplasmic. The helical transmembrane segment at 415 to 435 (LMGFIMGSWFLTTAGAAIIAG) threads the bilayer. Residues 436–459 (KIANLMAVPENVTDPLVSLEVYGH) lie on the Periplasmic side of the membrane. A helical transmembrane segment spans residues 460 to 480 (VFLQIGIVTAVIAALMLLTAP). Residues 481–501 (KLNRMTQDDSADLKARETAAA) are Cytoplasmic-facing.

It belongs to the major facilitator superfamily. Proton-dependent oligopeptide transporter (POT/PTR) (TC 2.A.17) family. DtpA subfamily.

Its subcellular location is the cell inner membrane. In terms of biological role, proton-dependent permease that transports di- and tripeptides. The protein is Dipeptide and tripeptide permease A of Klebsiella pneumoniae (strain 342).